A 912-amino-acid polypeptide reads, in one-letter code: Glutamate receptor 3.2 (912 aa).

The N-terminal stretch at 1–22 (MFWVLVLLSFIVLIGDGMISEG) is a signal peptide. The Extracellular portion of the chain corresponds to 23 to 587 (AGLRPRYVDV…TPWAFLRPFT (565 aa)). N-linked (GlcNAc...) asparagine glycosylation is found at N306, N338, N378, N417, N435, N445, and N532. Residues 544–546 (DIA) and R551 contribute to the glycine site. L-methionine is bound by residues 544-546 (DIA) and R551. A helical transmembrane segment spans residues 588–608 (PPMWAVTAAFFLIVGSVIWIL). Residues 609–617 (EHRINDEFR) lie on the Cytoplasmic side of the membrane. A helical transmembrane segment spans residues 618-638 (GPPRKQIVTILWFSFSTMFFS). The Cytoplasmic segment spans residues 639 to 649 (HRENTVSTLGR). A helical membrane pass occupies residues 650-670 (AVLLIWLFVVLIITSSYTASL). Residues 671–828 (TSILTVQQLN…EDSEQLKLRS (158 aa)) are Extracellular-facing. Y703 serves as a coordination point for glycine. Residue Y703 participates in L-methionine binding. N734 carries N-linked (GlcNAc...) asparagine glycosylation. 743 to 746 (ERPY) is a glycine binding site. 743-746 (ERPY) is an L-methionine binding site. Cysteines 755 and 809 form a disulfide. N-linked (GlcNAc...) asparagine glycosylation is found at N808 and N813. Residues 829–849 (FWGLFLVCGISCFIALFIYFF) traverse the membrane as a helical segment. At 850-912 (KIVRDFFRHG…DLSLKPSRPI (63 aa)) the chain is on the cytoplasmic side. The segment at 888–912 (KEDESKRRMKRKRNDDLSLKPSRPI) is disordered.

Belongs to the glutamate-gated ion channel (TC 1.A.10.1) family. As to quaternary structure, forms a heteromeric channel with GLR3.4. As to expression, expressed in leaves and siliques, and at lower level in flowers and roots. Detected in the vascular tissues of both shoots and roots. Expressed in root phloem.

The protein localises to the cell membrane. Its function is as follows. Glutamate-gated receptor that probably acts as a non-selective cation channel. May be involved in light-signal transduction and calcium homeostasis via the regulation of calcium influx into cells. Could play a role in calcium unloading from the xylem vessels. Acts as a negative regulator of lateral root initiation and development. May restrict primordia numbers and position along the root axis by a signaling process originating in the phloem. The protein is Glutamate receptor 3.2 of Arabidopsis thaliana (Mouse-ear cress).